We begin with the raw amino-acid sequence, 56 residues long: Large ribosomal subunit protein bL32 (56 aa).

This sequence belongs to the bacterial ribosomal protein bL32 family.

This is Large ribosomal subunit protein bL32 from Bacillus cereus (strain ATCC 14579 / DSM 31 / CCUG 7414 / JCM 2152 / NBRC 15305 / NCIMB 9373 / NCTC 2599 / NRRL B-3711).